The primary structure comprises 394 residues: 1-deoxy-D-xylulose 5-phosphate reductoisomerase (394 aa).

Residues Thr-13, Gly-14, Ser-15, Ile-16, and Asn-127 each contribute to the NADPH site. 1-deoxy-D-xylulose 5-phosphate is bound at residue Lys-128. Glu-129 provides a ligand contact to NADPH. Asp-153 provides a ligand contact to Mn(2+). Residues Ser-154, Glu-155, Ser-184, and His-207 each contribute to the 1-deoxy-D-xylulose 5-phosphate site. Position 155 (Glu-155) interacts with Mn(2+). Residue Gly-213 participates in NADPH binding. 1-deoxy-D-xylulose 5-phosphate contacts are provided by Ser-220, Asn-225, Lys-226, and Glu-229. Mn(2+) is bound at residue Glu-229.

The protein belongs to the DXR family. Requires Mg(2+) as cofactor. It depends on Mn(2+) as a cofactor.

The catalysed reaction is 2-C-methyl-D-erythritol 4-phosphate + NADP(+) = 1-deoxy-D-xylulose 5-phosphate + NADPH + H(+). It participates in isoprenoid biosynthesis; isopentenyl diphosphate biosynthesis via DXP pathway; isopentenyl diphosphate from 1-deoxy-D-xylulose 5-phosphate: step 1/6. Its function is as follows. Catalyzes the NADPH-dependent rearrangement and reduction of 1-deoxy-D-xylulose-5-phosphate (DXP) to 2-C-methyl-D-erythritol 4-phosphate (MEP). The chain is 1-deoxy-D-xylulose 5-phosphate reductoisomerase from Ectopseudomonas mendocina (strain ymp) (Pseudomonas mendocina).